We begin with the raw amino-acid sequence, 301 residues long: Porphobilinogen deaminase (301 aa).

Cys240 is modified (S-(dipyrrolylmethanemethyl)cysteine).

This sequence belongs to the HMBS family. As to quaternary structure, monomer. Dipyrromethane serves as cofactor.

It catalyses the reaction 4 porphobilinogen + H2O = hydroxymethylbilane + 4 NH4(+). Its pathway is porphyrin-containing compound metabolism; protoporphyrin-IX biosynthesis; coproporphyrinogen-III from 5-aminolevulinate: step 2/4. In terms of biological role, tetrapolymerization of the monopyrrole PBG into the hydroxymethylbilane pre-uroporphyrinogen in several discrete steps. The polypeptide is Porphobilinogen deaminase (Clostridioides difficile (strain 630) (Peptoclostridium difficile)).